The primary structure comprises 553 residues: Efflux pump alnA (553 aa).

Residues 1–21 are compositionally biased toward basic and acidic residues; sequence MSSDDTVKQEHSCSADSEKQD. A disordered region spans residues 1–36; that stretch reads MSSDDTVKQEHSCSADSEKQDSSCASDNEQPKEPQS. 13 helical membrane passes run 40–60, 85–105, 110–130, 136–156, 174–194, 202–222, 243–263, 270–290, 319–339, 355–375, 382–402, 413–433, and 522–542; these read IHGLLWVVTILAIYSSTFLFA, WSGVAFVMASSATVLTWLQIF, IKWMYIFSIAVFMGGSAICGA, MLIGGRVICGIGGVGQYVGVM, AMGLTWGAGTVLGPIIGGAFT, WSFYINLVVGGLFAPVYIFLL, LVGTLILFAAFAAGVIGINFA, SEPGIIVAITLGGVLFIVFGI, LLFVCGCCTGVCVTVPTYVIP, VRLLPFVCLLVFSCVSGGYLA, IPWYIMGGGFCLIGSALMYTI, GYSSLIGLGSGMYLQLGHAVA, and TYILCIVAAAVTLLATLGMKW.

Belongs to the major facilitator superfamily. TCR/Tet family.

The protein localises to the cell membrane. Functionally, efflux pump; part of the gene cluster that mediates the biosynthesis of asperlin, a polyketide showing anti-inflammatory, antitumor and antibiotic activities. Is probably involved in the efflux of asperlin. The polypeptide is Efflux pump alnA (Emericella nidulans (strain FGSC A4 / ATCC 38163 / CBS 112.46 / NRRL 194 / M139) (Aspergillus nidulans)).